Here is a 204-residue protein sequence, read N- to C-terminus: Peptide deformylase (204 aa).

Fe cation-binding residues include C131 and H174. Residue E175 is part of the active site. H178 is a binding site for Fe cation.

This sequence belongs to the polypeptide deformylase family. Requires Fe(2+) as cofactor.

The catalysed reaction is N-terminal N-formyl-L-methionyl-[peptide] + H2O = N-terminal L-methionyl-[peptide] + formate. Its function is as follows. Removes the formyl group from the N-terminal Met of newly synthesized proteins. Requires at least a dipeptide for an efficient rate of reaction. N-terminal L-methionine is a prerequisite for activity but the enzyme has broad specificity at other positions. The protein is Peptide deformylase of Streptococcus pyogenes serotype M1.